Here is a 186-residue protein sequence, read N- to C-terminus: Signal peptidase I (186 aa).

The Cytoplasmic portion of the chain corresponds to 1-19 (MTEEKSTNKKNSLFEWVKA). The helical transmembrane segment at 20–40 (IIIAVVLALLIRAFLFEPYLV) threads the bilayer. Residues 41 to 186 (EGTSMDPTLH…FPFNEIRKTD (146 aa)) lie on the Extracellular side of the membrane. Residues Ser44 and Lys86 contribute to the active site.

It belongs to the peptidase S26 family.

The protein localises to the cell membrane. The catalysed reaction is Cleavage of hydrophobic, N-terminal signal or leader sequences from secreted and periplasmic proteins.. This chain is Signal peptidase I (lepB), found in Bacillus licheniformis.